Consider the following 745-residue polypeptide: F-box only protein 30 (745 aa).

The segment at 48 to 109 (EHRLLCPFER…SYADRKSYEN (62 aa)) adopts a TRAF-type zinc-finger fold. 2 disordered regions span residues 211–231 (NTSV…LEDQ) and 305–324 (GDSK…SDGT). A compositionally biased stretch (basic and acidic residues) spans 222–231 (QNARESLEDQ). The span at 305-314 (GDSKQSNLTN) shows a compositional bias: polar residues. An F-box domain is found at 610 to 658 (NDHLSSLPFEVLQHIAGFLDGFSLCQLSCVSKLMRDVCGSLLQSRGMVI).

Part of a SCF (SKP1-cullin-F-box) protein ligase complex. Interacts with SKP1, CUL1 and RBX1/ROC1. Post-translationally, auto-ubiquitinated. In terms of processing, may be neddylated. Neddylation may be required for E3 ligase activity.

It participates in protein modification; protein ubiquitination. In terms of biological role, substrate-recognition component of the SCF (SKP1-CUL1-F-box protein)-type E3 ubiquitin ligase complex. Required for muscle atrophy following denervation. The polypeptide is F-box only protein 30 (FBXO30) (Homo sapiens (Human)).